We begin with the raw amino-acid sequence, 568 residues long: MAEARDLFKEFKVQSVSEFFRRNAAMLGYTGSIRSLTTVIHEAVTNSLDACEEAGILPYVRVEIEELGKEHYKVIVEDNGPGIPEDYIPHVFGKMLAGTKAHRNIQSRGQQGIGISGAVMFAQITSGKATRVITSTGDDEIVEAWVKIDVQKNEGKIVKKIKHPNPKRWRGTRIELEVKNVKYVRSKQGVYWYLKLTAIANPHAHIELVEPDGKLIVFPRSSEDIPEPPVEMKPHPKGVMTDDVYTMAHRSKRSTVRRFLVSEFSRISDKKVDELVLYIAALRLINREVTDQNLKSQLIERLANGEVEKVLKSFGRKWKKVVEEVEKIMEKPPEKLTWHEAEEIVEAFKLMKFLAPPTYGLRPIGEENIEKGLSSILRPEFVTAVTRPPKVYSGGIPFQVEVGIAYGGEITNSEILRYANRVPLLFDAGSCVITSAVRSIDWRRYRVESFDNAPLVVLVNVVSVHVPYTSTGKQSIASIDEIYNEIRLALMEAARRLAAYLGGKYRRLYQIRRKKIFEKYLPEIARSLHILTGEPEEKIKEYFLRLIESKITVAQEGVSEVEVEEGEA.

Residues N46, D78, 99-100 (TK), 109-116 (GQQGIGIS), and K473 each bind ATP.

This sequence belongs to the TOP6B family. In terms of assembly, homodimer. Heterotetramer of two Top6A and two Top6B chains.

The catalysed reaction is ATP-dependent breakage, passage and rejoining of double-stranded DNA.. Its function is as follows. Relaxes both positive and negative superturns and exhibits a strong decatenase activity. The sequence is that of Type 2 DNA topoisomerase 6 subunit B from Pyrococcus furiosus (strain ATCC 43587 / DSM 3638 / JCM 8422 / Vc1).